A 92-amino-acid chain; its full sequence is MNDQTPDRYVTFLGLDCDAKADRLMDMLAVRIQEDDSRWVGYFRQKLAEKERMATDNLHFVGSQINSLYSYFEELEDADALDLLWHLEHNCC.

Belongs to the CowN family.

Its function is as follows. Is required to sustain N(2)-dependent growth in the presence of low levels of carbon monoxide (CO). Probably acts by protecting the N(2) fixation ability of the nitrogenase complex, which is inactivated in the presence of CO. The polypeptide is N(2)-fixation sustaining protein CowN (Cereibacter sphaeroides (strain KD131 / KCTC 12085) (Rhodobacter sphaeroides)).